We begin with the raw amino-acid sequence, 215 residues long: 16S rRNA (adenine(1408)-N(1))-methyltransferase (215 aa).

S-adenosyl-L-methionine is bound by residues glycine 32, aspartate 55, 87-88 (AE), 102-107 (LMPWGS), and 191-193 (TSW).

It belongs to the methyltransferase superfamily. Kanamycin-apramycin resistance family.

The enzyme catalyses adenosine(1408) in 16S rRNA + S-adenosyl-L-methionine = N(1)-methyladenosine(1408) in 16S rRNA + S-adenosyl-L-homocysteine + H(+). Specifically methylates the N(1) position of adenine 1408 in 16S rRNA. Confers resistance to various aminoglycosides. This Streptoalloteichus hindustanus protein is 16S rRNA (adenine(1408)-N(1))-methyltransferase (kamB).